A 338-amino-acid polypeptide reads, in one-letter code: Ketol-acid reductoisomerase (NADP(+)) (338 aa).

The KARI N-terminal Rossmann domain occupies 1–181; the sequence is MKVFYDKDAD…GGGRAGIIET (181 aa). Residues 24-27, arginine 47, and serine 52 each bind NADP(+); that span reads YGSQ. Histidine 107 is an active-site residue. Glycine 133 is a binding site for NADP(+). The KARI C-terminal knotted domain maps to 182-327; it reads NFREETETDL…SKLRAMMPWI (146 aa). Residues aspartate 190, glutamate 194, glutamate 226, and glutamate 230 each coordinate Mg(2+). Serine 251 is a substrate binding site.

It belongs to the ketol-acid reductoisomerase family. The cofactor is Mg(2+).

It carries out the reaction (2R)-2,3-dihydroxy-3-methylbutanoate + NADP(+) = (2S)-2-acetolactate + NADPH + H(+). The enzyme catalyses (2R,3R)-2,3-dihydroxy-3-methylpentanoate + NADP(+) = (S)-2-ethyl-2-hydroxy-3-oxobutanoate + NADPH + H(+). It participates in amino-acid biosynthesis; L-isoleucine biosynthesis; L-isoleucine from 2-oxobutanoate: step 2/4. It functions in the pathway amino-acid biosynthesis; L-valine biosynthesis; L-valine from pyruvate: step 2/4. Involved in the biosynthesis of branched-chain amino acids (BCAA). Catalyzes an alkyl-migration followed by a ketol-acid reduction of (S)-2-acetolactate (S2AL) to yield (R)-2,3-dihydroxy-isovalerate. In the isomerase reaction, S2AL is rearranged via a Mg-dependent methyl migration to produce 3-hydroxy-3-methyl-2-ketobutyrate (HMKB). In the reductase reaction, this 2-ketoacid undergoes a metal-dependent reduction by NADPH to yield (R)-2,3-dihydroxy-isovalerate. The chain is Ketol-acid reductoisomerase (NADP(+)) from Burkholderia mallei (strain NCTC 10229).